The following is a 145-amino-acid chain: FAD synthase (145 aa).

ATP is bound by residues 5–6 (TF), 10–13 (HPGH), Asp-92, and Tyr-119.

This sequence belongs to the archaeal FAD synthase family. In terms of assembly, homodimer. Requires a divalent metal cation as cofactor.

It catalyses the reaction FMN + ATP + H(+) = FAD + diphosphate. The protein operates within cofactor biosynthesis; FAD biosynthesis; FAD from FMN: step 1/1. Functionally, catalyzes the transfer of the AMP portion of ATP to flavin mononucleotide (FMN) to produce flavin adenine dinucleotide (FAD) coenzyme. The protein is FAD synthase of Methanothermus fervidus (strain ATCC 43054 / DSM 2088 / JCM 10308 / V24 S).